Reading from the N-terminus, the 394-residue chain is Phosphopentomutase (394 aa).

The Mn(2+) site is built by Asp-13, Asp-286, His-291, Asp-327, His-328, and His-339.

Belongs to the phosphopentomutase family. It depends on Mn(2+) as a cofactor.

Its subcellular location is the cytoplasm. The catalysed reaction is 2-deoxy-alpha-D-ribose 1-phosphate = 2-deoxy-D-ribose 5-phosphate. The enzyme catalyses alpha-D-ribose 1-phosphate = D-ribose 5-phosphate. It functions in the pathway carbohydrate degradation; 2-deoxy-D-ribose 1-phosphate degradation; D-glyceraldehyde 3-phosphate and acetaldehyde from 2-deoxy-alpha-D-ribose 1-phosphate: step 1/2. In terms of biological role, isomerase that catalyzes the conversion of deoxy-ribose 1-phosphate (dRib-1-P) and ribose 1-phosphate (Rib-1-P) to deoxy-ribose 5-phosphate (dRib-5-P) and ribose 5-phosphate (Rib-5-P), respectively. The protein is Phosphopentomutase of Bacillus cereus (strain G9842).